The chain runs to 184 residues: C-phycoerythrin class 1 subunit beta (184 aa).

Cysteine 50 and cysteine 61 together coordinate (2R,3E)-phycoerythrobilin. N4-methylasparagine is present on asparagine 72. (2R,3E)-phycoerythrobilin is bound by residues cysteine 82 and cysteine 165.

It belongs to the phycobiliprotein family. As to quaternary structure, heterodimer of an alpha and a beta chain. In terms of processing, contains three covalently linked phycoerythrobilin chromophores.

The protein localises to the cellular thylakoid membrane. In terms of biological role, light-harvesting photosynthetic bile pigment-protein from the phycobiliprotein complex. In Synechococcus sp. (strain WH8020), this protein is C-phycoerythrin class 1 subunit beta (cpeB).